Reading from the N-terminus, the 582-residue chain is MEPPTSHVTNAFSDSDSASVEEGGADADADVEALRRLSDNLAAAFRSPEDFAFLADARIAVPGGGGGGGDLLVHRCVLSARSPFLRGVFARRAAAAAGGGGEDGGERLELRELLGGGGEEVEVGYEALRLVLDYLYSGRVGDLPKAACLCVDEDCAHVGCHPAVAFMAQVLFAASTFQVAELTNLFQRRLLDVLDKVEVDNLLLILSVANLCNKSCMKLLERCLDMVVRSNLDMITLEKSLPPDVIKQIIDARLSLGLISPENKGFPNKHVRRIHRALDSDDVELVRMLLTEGQTNLDDAFALHYAVEHCDSKITTELLDLALADVNHRNPRGYTVLHIAARRREPKIIVSLLTKGARPADVTFDGRKAVQISKRLTKQGDYFGVTEEGKPSPKDRLCIEILEQAERRDPQLGEASVSLAMAGESLRGRLLYLENRVALARIMFPMEARVAMDIAQVDGTLEFNLGSGANPPPERQRTTVDLNESPFIMKEEHLARMTALSKTVELGKRFFPRCSNVLDKIMDDETDPVSLGRDTSAEKRKRFHDLQDVLQKAFHEDKEENDRSGLSSSSSSTSIGAIRPRR.

A compositionally biased stretch (polar residues) spans 1 to 18; sequence MEPPTSHVTNAFSDSDSA. The segment at 1–25 is disordered; sequence MEPPTSHVTNAFSDSDSASVEEGGA. The 86-residue stretch at 55-140 folds into the BTB domain; the sequence is ADARIAVPGG…VLDYLYSGRV (86 aa). The C2HC NPR-type zinc-finger motif lies at 147–161; the sequence is ACLCVDEDCAHVGCH. Residues cysteine 150, cysteine 155, histidine 157, and cysteine 160 each coordinate Zn(2+). ANK repeat units lie at residues 229 to 258, 269 to 299, 301 to 328, and 332 to 361; these read RSNLDMITLEKSLPPDVIKQIIDARLSLGL, KHVRRIHRALDSDDVELVRMLLTEGQTNLDD, FALHYAVEHCDSKITTELLDLALADVNH, and RGYTVLHIAARRREPKIIVSLLTKGARPAD. Residues 391–526 are salicylic acid-binding core (SBC); the sequence is PSPKDRLCIE…VLDKIMDDET (136 aa). Arginine 436 contributes to the salicylate binding site. The segment at 551–582 is disordered; the sequence is QKAFHEDKEENDRSGLSSSSSSTSIGAIRPRR. Over residues 553–563 the composition is skewed to basic and acidic residues; that stretch reads AFHEDKEENDR. Low complexity predominate over residues 564 to 574; the sequence is SGLSSSSSSTS.

This sequence belongs to the plant 'ANKYRIN-BTB/POZ' family. 'NPR1-like' subfamily. In terms of assembly, oligomer in an uninduced state; disulfide-linked. Forms activated monomer upon changes in cellular redox potential. Interacts with TGA2.1, TGA2.2, TGA2.3, LG2, TGAL1 and TGAL4. Interacts with NRR, RH1, RH2 and RH3.

It is found in the cytoplasm. Its subcellular location is the nucleus. The protein localises to the nuclear body. It functions in the pathway protein modification; protein ubiquitination. Salicylic acid (SA)-binding substrate-specific adapter of an E3 ubiquitin-protein ligase complex (CUL3-RBX1-BTB) which mediates the ubiquitination and subsequent proteasomal degradation of target proteins. Transcription cofactor that represses gene expression in the absence of salicylic acid (SA), when attached to negative cis-elements (W-box) with WRKY transcription factors, but stimulates gene expression upon activation by SA, when sumoylated and attached to positive cis-elements (as-1) with TGA transcription factors, thus confering immunity through a series of gene regulations ending in a significant increase in antimicrobial and defense genes expression. Key positive factor of disease resistance. Plays an essential role in benzothiadiazole (BTH)-induced resistance to the blast fungus disease caused by Magnaporthe oryzae. Involved in defense response against the bacterial blight disease caused by Xanthomonas oryzae pv. oryzae (Xoo). Over-expression of NPR1/NH1 confers disease resistance to Xoo, but also enhances herbivore susceptibility. Functions as a transcriptional coactivator of TGA2.1 and LG2 in vitro. Involved in defense response against herbivore. Plants silencing NPR1/NH1 have increased herbivore-induced trypsin proteinase inhibitors and volatiles, which reduces the performance of the striped stem borer (SSB) Chilo suppressalis. The polypeptide is BTB/POZ domain and ankyrin repeat-containing protein NPR1 (Oryza sativa subsp. japonica (Rice)).